A 336-amino-acid polypeptide reads, in one-letter code: MEEETCLDCKRPTIMVVDHSSGDTICSECGLVLEAHIIEYSQEWRTFASDDNHSDRDPNRVGAATNPFLKSGDLVTIIEKPKETASSVLSKDDISTLFRAHNQVKNHEEDLIKQAFEEIQRMTDALDLDIVINSRACEIVSKYDGHANTKLRRGKKLNAICAASVSTACRELQLSRTLKEIAEVANGVDKKDIRKESLVIKRVLESHQTSVSASQAIINTGELVRRFCSKLDISQREIMAIPEAVEKAENFDIRRNPKSVLAAIIFMISHISQTNRKPIREIGIVAEVVENTIKNSVKDMYPYALKIIPNWYACESDIIKRLDGVITSWDSAKFSV.

A TFIIB-type zinc finger spans residues 2–34 (EEETCLDCKRPTIMVVDHSSGDTICSECGLVLE). C6, C9, C26, and C29 together coordinate Zn(2+).

Specifically expressed in reproductive organs and seeds.

It is found in the nucleus. Functionally, plant-specific TFIIB-related protein involved in the regulation of endosperm proliferation during the syncytial phase of endosperm development. Does not contribute to RNA polymerase IV or V activities in reproductive tissues. This chain is Plant-specific TFIIB-related protein 2, found in Arabidopsis thaliana (Mouse-ear cress).